Consider the following 201-residue polypeptide: Esterase TesA (201 aa).

The N-terminal stretch at 1–21 (MRALLLSGCLALVLLTQQAAA) is a signal peptide. The Nucleophile role is filled by S30. Residues D177 and H180 contribute to the active site.

The protein belongs to the 'GDSL' lipolytic enzyme family.

Its subcellular location is the secreted. The enzyme catalyses a carboxylic ester + H2O = an alcohol + a carboxylate + H(+). Functionally, esterase that exhibits the highest activity towards Tween detergents and p-nitrophenyl esters of short acyl chain length. Also displays a low thioesterase activity towards palmitoyl-coenzyme A, but is not active towards acetyl-coenzyme A. This chain is Esterase TesA (tesA), found in Pseudomonas aeruginosa (strain ATCC 15692 / DSM 22644 / CIP 104116 / JCM 14847 / LMG 12228 / 1C / PRS 101 / PAO1).